The primary structure comprises 484 residues: Zinc metalloproteinase homolog-disintegrin albolatin (484 aa).

Positions 1–20 are cleaved as a signal peptide; it reads MIQVLLVTICLAVFPYQGSS. Positions 21–191 are excised as a propeptide; it reads IILESGNVND…KTSQLNLPLL (171 aa). N-linked (GlcNAc...) asparagine glycosylation is found at Asn-80, Asn-251, and Asn-301. The Peptidase M12B domain maps to 194 to 392; it reads RCIELVMVAD…WTSYCLYNEP (199 aa). 10 cysteine pairs are disulfide-bonded: Cys-305-Cys-387, Cys-345-Cys-369, Cys-347-Cys-352, Cys-403-Cys-422, Cys-414-Cys-432, Cys-416-Cys-427, Cys-426-Cys-449, Cys-440-Cys-446, Cys-445-Cys-470, and Cys-458-Cys-477. Residues 400–484 enclose the Disintegrin domain; sequence PPVCGNYYLE…GDCPWIGYYG (85 aa). Residues 462–464 carry the Cell attachment site; atypical (KGD) motif; it reads KGD.

This sequence belongs to the venom metalloproteinase (M12B) family. P-II subfamily. P-IIb sub-subfamily. Homodimer; disulfide-linked (disintegrin). In terms of tissue distribution, expressed by the venom gland.

The protein resides in the secreted. Functionally, the function of this complete protein has not been studied, but it may be similar to the function of the disintegrin domain. A recombinant protein of this domain (409-484) inhibits collagen-induced human platelet aggregation, without having effect on ADP-induced aggregation. It may act either by blocking the binding of fibrinogen to the platelet receptor GPIIb/GPIIIa (ITGA2B/ITGB3) or by blocking the binding of collagen to the integrin alpha-2/beta-1 complex (ITGA2/ITGB1). The polypeptide is Zinc metalloproteinase homolog-disintegrin albolatin (Trimeresurus albolabris (White-lipped pit viper)).